The sequence spans 459 residues: tRNA modification GTPase MnmE (459 aa).

Arg29, Glu86, and Lys125 together coordinate (6S)-5-formyl-5,6,7,8-tetrahydrofolate. Positions 221-382 (GMNVVIAGRP…LTEHLKAVMG (162 aa)) constitute a TrmE-type G domain. Asn231 is a K(+) binding site. Residues 231–236 (NAGKSS), 250–256 (TNIEGTT), and 275–278 (DTAG) each bind GTP. Residue Ser235 coordinates Mg(2+). 3 residues coordinate K(+): Thr250, Ile252, and Thr255. Residue Thr256 coordinates Mg(2+). Position 459 (Lys459) interacts with (6S)-5-formyl-5,6,7,8-tetrahydrofolate.

This sequence belongs to the TRAFAC class TrmE-Era-EngA-EngB-Septin-like GTPase superfamily. TrmE GTPase family. In terms of assembly, homodimer. Heterotetramer of two MnmE and two MnmG subunits. The cofactor is K(+).

It localises to the cytoplasm. Functionally, exhibits a very high intrinsic GTPase hydrolysis rate. Involved in the addition of a carboxymethylaminomethyl (cmnm) group at the wobble position (U34) of certain tRNAs, forming tRNA-cmnm(5)s(2)U34. The sequence is that of tRNA modification GTPase MnmE from Marinomonas sp. (strain MWYL1).